The primary structure comprises 354 residues: Guanine nucleotide-binding protein G(o) subunit alpha (354 aa).

A lipid anchor (N-myristoyl glycine) is attached at glycine 2. Cysteine 3 carries the S-palmitoyl cysteine lipid modification. Residues 32–354 (KDVKLLLLGA…ANNLRGCGLY (323 aa)) form the G-alpha domain. Residues 35–48 (KLLLLGAGESGKST) are G1 motif. Positions 43, 46, 47, 48, 152, 176, 177, 178, and 179 each coordinate GTP. Residue serine 47 participates in Mg(2+) binding. A G2 motif region spans residues 174–182 (DILRTRVKT). Threonine 182 contributes to the Mg(2+) binding site. The G3 motif stretch occupies residues 197–206 (FRLFDVGGQR). Glutamine 205 carries the post-translational modification 5-glutamyl histamine. The G4 motif stretch occupies residues 266–273 (ILFLNKKD). Residues asparagine 270, aspartate 273, and cysteine 325 each coordinate GTP. Residues 324–329 (TCATDT) form a G5 motif region. A Deamidated asparagine; in form Alpha-3 modification is found at asparagine 346. Cysteine 351 carries S-palmitoyl cysteine lipidation.

This sequence belongs to the G-alpha family. G(i/o/t/z) subfamily. As to quaternary structure, g proteins are composed of 3 units; alpha, beta and gamma. The alpha chain contains the guanine nucleotide binding site. Forms a complex with GNB1 and GNG3. Interacts with RGS14. Interacts with RGS16. Interacts with RGS19. Interacts (when palmitoylated) with ADGRG3. In terms of processing, deamidation of Asn-346 converts alpha-1 to alpha-3. Histaminylated at Gln-205 residues by TGM2.

The protein resides in the cell membrane. The protein localises to the membrane. It carries out the reaction GTP + H2O = GDP + phosphate + H(+). Its activity is regulated as follows. The GTPase activity is promoted by GTPAse activators, such as RGS14, RGS16 and RGS19. In terms of biological role, guanine nucleotide-binding proteins (G proteins) function as transducers downstream of G protein-coupled receptors (GPCRs) in numerous signaling cascades. The alpha chain contains the guanine nucleotide binding site and alternates between an active, GTP-bound state and an inactive, GDP-bound state. Signaling by an activated GPCR promotes GDP release and GTP binding. The alpha subunit has a low GTPase activity that converts bound GTP to GDP, thereby terminating the signal. Both GDP release and GTP hydrolysis are modulated by numerous regulatory proteins. Signaling is mediated via effector proteins, such as adenylate cyclase. Inhibits adenylate cyclase activity, leading to decreased intracellular cAMP levels. This chain is Guanine nucleotide-binding protein G(o) subunit alpha (GNAO1), found in Cricetulus longicaudatus (Long-tailed dwarf hamster).